The following is a 506-amino-acid chain: Maturase K (506 aa).

Belongs to the intron maturase 2 family. MatK subfamily.

It is found in the plastid. The protein resides in the chloroplast. Its function is as follows. Usually encoded in the trnK tRNA gene intron. Probably assists in splicing its own and other chloroplast group II introns. The chain is Maturase K from Rhododendron ferrugineum (Alpenrose).